The following is a 237-amino-acid chain: Uridylate kinase (237 aa).

10-13 lines the ATP pocket; the sequence is KLSG. Glycine 52 lines the UMP pocket. Positions 53 and 57 each coordinate ATP. UMP contacts are provided by residues aspartate 72 and 133 to 140; that span reads TGNPFFTT. ATP contacts are provided by threonine 160, tyrosine 166, and aspartate 169.

It belongs to the UMP kinase family. Homohexamer.

Its subcellular location is the cytoplasm. It catalyses the reaction UMP + ATP = UDP + ADP. Its pathway is pyrimidine metabolism; CTP biosynthesis via de novo pathway; UDP from UMP (UMPK route): step 1/1. Inhibited by UTP. Catalyzes the reversible phosphorylation of UMP to UDP. This Thiobacillus denitrificans (strain ATCC 25259 / T1) protein is Uridylate kinase.